We begin with the raw amino-acid sequence, 122 residues long: Seminal vesicle secretory protein 5 (122 aa).

The signal sequence occupies residues 1-21; the sequence is MSPTSFFLLTLLLVLVTEARG. The interval 23–122 is disordered; that stretch reads RERFSQSAED…KTRVKSRILK (100 aa). The segment covering 27–37 has biased composition (polar residues); it reads SQSAEDPSSSH.

It belongs to the SVP2/SVP5/SVP6 family. As to expression, testis.

The protein localises to the secreted. The protein resides in the extracellular space. This chain is Seminal vesicle secretory protein 5 (Svs5), found in Mus musculus (Mouse).